The chain runs to 400 residues: MIGVIGVKRNVDIAIREKLALYPKKHKKYVGELLNSFKEVVILNTCNRTEIYFNCTEEISEDEIFDKIFNVFNWNDDLKKYMFLSKEKRAVTHLMEVICGFHSRILGEDQILGQIKDAYKTAISDNSISSELQKMFEIAIACGKKFKTECKMFEVPVSSVSISINSALLKGCRKFMVLGYGEIGKLAIKHLLSHKVECIYLIVRDKSKASDLEGEIVEVLDFNEKNQVINEVDCIVSCTAAPHTVVRNEDIKTEGDIIHIYDLAVPRDVDKELSEKERVILKDIDEISKIDDKNKKIRKERMEEYKHIVEESIEEFLNWLKIREVSSKIRNIKIRENEICSERIKTFSNKGNGENAKLAERMIKSTADAYVNRAIELLKSEALKGSDSSCAEIIEKIFLT.

Residues 45-48 (TCNR), serine 103, 108-110 (EDQ), and glutamine 114 contribute to the substrate site. The active-site Nucleophile is the cysteine 46. 179–184 (GYGEIG) contributes to the NADP(+) binding site.

It belongs to the glutamyl-tRNA reductase family. Homodimer.

It carries out the reaction (S)-4-amino-5-oxopentanoate + tRNA(Glu) + NADP(+) = L-glutamyl-tRNA(Glu) + NADPH + H(+). It participates in porphyrin-containing compound metabolism; protoporphyrin-IX biosynthesis; 5-aminolevulinate from L-glutamyl-tRNA(Glu): step 1/2. Functionally, catalyzes the NADPH-dependent reduction of glutamyl-tRNA(Glu) to glutamate 1-semialdehyde (GSA). The sequence is that of Glutamyl-tRNA reductase from Clostridium perfringens (strain 13 / Type A).